Consider the following 486-residue polypeptide: Lipase 1 (486 aa).

Cys58 and Cys82 are disulfide-bonded. Ser193 acts as the Acyl-ester intermediate in catalysis. The active-site Charge relay system is Asp303. A glycan (N-linked (GlcNAc...) asparagine) is linked at Asn332. The Charge relay system role is filled by His392.

The protein belongs to the type-B carboxylesterase/lipase family.

It catalyses the reaction a triacylglycerol + H2O = a diacylglycerol + a fatty acid + H(+). The protein is Lipase 1 (LIP1) of Yarrowia lipolytica (strain CLIB 122 / E 150) (Yeast).